Consider the following 163-residue polypeptide: Urease accessory protein UreE (163 aa).

Residues 144 to 163 (QPEPGAYGGSSAGSHDGHHH) form a disordered region.

The protein belongs to the UreE family.

The protein localises to the cytoplasm. In terms of biological role, involved in urease metallocenter assembly. Binds nickel. Probably functions as a nickel donor during metallocenter assembly. This Aliivibrio fischeri (strain MJ11) (Vibrio fischeri) protein is Urease accessory protein UreE.